The primary structure comprises 64 residues: SPbeta prophage-derived uncharacterized protein YosJ (64 aa).

In Bacillus subtilis (strain 168), this protein is SPbeta prophage-derived uncharacterized protein YosJ (yosJ).